We begin with the raw amino-acid sequence, 159 residues long: Ribosomal RNA large subunit methyltransferase H (159 aa).

S-adenosyl-L-methionine is bound by residues Leu76, Gly108, and 127–132 (FSKMTF).

The protein belongs to the RNA methyltransferase RlmH family. In terms of assembly, homodimer.

It localises to the cytoplasm. The enzyme catalyses pseudouridine(1915) in 23S rRNA + S-adenosyl-L-methionine = N(3)-methylpseudouridine(1915) in 23S rRNA + S-adenosyl-L-homocysteine + H(+). Functionally, specifically methylates the pseudouridine at position 1915 (m3Psi1915) in 23S rRNA. This is Ribosomal RNA large subunit methyltransferase H from Geobacillus sp. (strain WCH70).